The chain runs to 152 residues: Transcriptional regulator MraZ (152 aa).

SpoVT-AbrB domains follow at residues 5–52 (ATTL…PLPE) and 81–124 (ADDC…NEDA).

This sequence belongs to the MraZ family. In terms of assembly, forms oligomers.

The protein localises to the cytoplasm. The protein resides in the nucleoid. This Idiomarina loihiensis (strain ATCC BAA-735 / DSM 15497 / L2-TR) protein is Transcriptional regulator MraZ.